Reading from the N-terminus, the 295-residue chain is Small ribosomal subunit protein uS2 (295 aa).

Ser2 is modified (N-acetylserine). Ser43 is modified (phosphoserine). Lys52 is modified (N6-acetyllysine). The interaction with PPP1R16B stretch occupies residues 54–113 (TWEKLLLAARAIVAIENPADVSVISSRNTGQRAVLKFAAATGATPIAGRFTPGTFTNQIQ). Residue Lys89 is modified to N6-acetyllysine; alternate. Lys89 participates in a covalent cross-link: Glycyl lysine isopeptide (Lys-Gly) (interchain with G-Cter in SUMO2); alternate. Phosphothreonine is present on Thr97. Laminin-binding regions lie at residues 161–180 (IPCN…MLAR) and 205–229 (RDPE…EFQG). [DE]-W-[ST] repeat units follow at residues 230–232 (EWT), 247–249 (DWS), 266–268 (DWS), 275–277 (DWS), and 293–295 (EWS). Residues 242 to 295 (QPEVADWSEGVQVPSVPIQQFPTEDWSAQPATEDWSAAPTAQATEWVGATTEWS) form a laminin-binding region. The interval 266-295 (DWSAQPATEDWSAAPTAQATEWVGATTEWS) is disordered.

Belongs to the universal ribosomal protein uS2 family. In terms of assembly, monomer (37LRP) and homodimer (67LR). Component of the small ribosomal subunit. Mature ribosomes consist of a small (40S) and a large (60S) subunit. The 40S subunit contains about 33 different proteins and 1 molecule of RNA (18S). The 60S subunit contains about 49 different proteins and 3 molecules of RNA (28S, 5.8S and 5S). Interacts with RPS21. Interacts with several laminins including at least LAMB1. Interacts with MDK. The mature dimeric form interacts with PPP1R16B (via its fourth ankyrin repeat). Interacts with PPP1CA only in the presence of PPP1R16B. Acylated. Acylation may be a prerequisite for conversion of the monomeric 37 kDa laminin receptor precursor (37LRP) to the mature dimeric 67 kDa laminin receptor (67LR), and may provide a mechanism for membrane association. In terms of processing, cleaved by stromelysin-3 (ST3) at the cell surface. Cleavage by stromelysin-3 may be a mechanism to alter cell-extracellular matrix interactions. In terms of tissue distribution, expressed in most neurons and in a subset of glial cells. The overall distribution of LR correlates with that reported for laminin-1 but also with brain regions classically associated with prion-related neurodegeneration.

The protein localises to the cell membrane. The protein resides in the cytoplasm. Its subcellular location is the nucleus. Its function is as follows. Required for the assembly and/or stability of the 40S ribosomal subunit. Required for the processing of the 20S rRNA-precursor to mature 18S rRNA in a late step of the maturation of 40S ribosomal subunits. Also functions as a cell surface receptor for laminin. Plays a role in cell adhesion to the basement membrane and in the consequent activation of signaling transduction pathways. May play a role in cell fate determination and tissue morphogenesis. Also acts as a receptor for several other ligands, including the pathogenic prion protein, viruses, and bacteria. Acts as a PPP1R16B-dependent substrate of PPP1CA. The chain is Small ribosomal subunit protein uS2 (Rpsa) from Rattus norvegicus (Rat).